The chain runs to 569 residues: CTP synthase (569 aa).

Residues 1 to 272 (MARPKNVKHI…DSRVLKKLGI (272 aa)) form an amidoligase domain region. Residue serine 18 coordinates CTP. Serine 18 provides a ligand contact to UTP. Position 19 to 24 (19 to 24 (SLGKGI)) interacts with ATP. Tyrosine 59 serves as a coordination point for L-glutamine. Aspartate 76 is a binding site for ATP. Mg(2+) contacts are provided by aspartate 76 and glutamate 146. Residues 153–155 (DIE), 193–198 (KTKPTQ), and lysine 229 each bind CTP. Residues 193-198 (KTKPTQ) and lysine 229 each bind UTP. A Glutamine amidotransferase type-1 domain is found at 299 to 543 (TIGICGKYTE…VAAAKDYARG (245 aa)). Residue glycine 363 participates in L-glutamine binding. The active-site Nucleophile; for glutamine hydrolysis is cysteine 390. Residues 391–394 (LGMQ), glutamate 414, and arginine 471 contribute to the L-glutamine site. Residues histidine 516 and glutamate 518 contribute to the active site.

The protein belongs to the CTP synthase family. Homotetramer.

The enzyme catalyses UTP + L-glutamine + ATP + H2O = CTP + L-glutamate + ADP + phosphate + 2 H(+). The catalysed reaction is L-glutamine + H2O = L-glutamate + NH4(+). It carries out the reaction UTP + NH4(+) + ATP = CTP + ADP + phosphate + 2 H(+). It functions in the pathway pyrimidine metabolism; CTP biosynthesis via de novo pathway; CTP from UDP: step 2/2. With respect to regulation, allosterically activated by GTP, when glutamine is the substrate; GTP has no effect on the reaction when ammonia is the substrate. The allosteric effector GTP functions by stabilizing the protein conformation that binds the tetrahedral intermediate(s) formed during glutamine hydrolysis. Inhibited by the product CTP, via allosteric rather than competitive inhibition. In terms of biological role, catalyzes the ATP-dependent amination of UTP to CTP with either L-glutamine or ammonia as the source of nitrogen. Regulates intracellular CTP levels through interactions with the four ribonucleotide triphosphates. This chain is CTP synthase, found in Chlorobium chlorochromatii (strain CaD3).